We begin with the raw amino-acid sequence, 249 residues long: U1 small nuclear ribonucleoprotein usp102 (249 aa).

The segment at 1–25 (MDPQTNSHQEVQQPSPKETDSQTPS) is disordered. Residues 26–105 (ETLYIRNIEE…KPMMIQYSKS (80 aa)) enclose the RRM 1 domain. Positions 113-157 (RESPEEIETRKKDRKNRREMLKRTSALQPAAPKPTHKKPVPKRNV) are disordered. Positions 114–134 (ESPEEIETRKKDRKNRREMLK) are enriched in basic and acidic residues. One can recognise an RRM 2 domain in the interval 174–247 (KVLLLQNIPQ…NQIKVTFARK (74 aa)).

Belongs to the RRM U1 A/B'' family. In terms of assembly, component of the spliceosome where it is associated with snRNP U1.

The protein localises to the nucleus. Its subcellular location is the nucleolus. Functionally, involved in nuclear mRNA splicing. This is U1 small nuclear ribonucleoprotein usp102 from Schizosaccharomyces pombe (strain 972 / ATCC 24843) (Fission yeast).